The sequence spans 304 residues: tRNA dimethylallyltransferase (304 aa).

2–9 lines the ATP pocket; it reads GPTASGKT. 4–9 contributes to the substrate binding site; that stretch reads TASGKT. Interaction with substrate tRNA regions lie at residues 27–30, 151–155, 232–237, and 265–272; these read DSAL, QRINR, RCVGYR, and KRQITWLR.

This sequence belongs to the IPP transferase family. In terms of assembly, monomer. The cofactor is Mg(2+).

The enzyme catalyses adenosine(37) in tRNA + dimethylallyl diphosphate = N(6)-dimethylallyladenosine(37) in tRNA + diphosphate. In terms of biological role, catalyzes the transfer of a dimethylallyl group onto the adenine at position 37 in tRNAs that read codons beginning with uridine, leading to the formation of N6-(dimethylallyl)adenosine (i(6)A). This chain is tRNA dimethylallyltransferase, found in Actinobacillus pleuropneumoniae serotype 5b (strain L20).